A 386-amino-acid chain; its full sequence is Alanine racemase 1 (386 aa).

The Proton acceptor; specific for D-alanine role is filled by lysine 38. Lysine 38 carries the post-translational modification N6-(pyridoxal phosphate)lysine. Arginine 136 provides a ligand contact to substrate. Residue tyrosine 267 is the Proton acceptor; specific for L-alanine of the active site. Position 315 (methionine 315) interacts with substrate.

The protein belongs to the alanine racemase family. Requires pyridoxal 5'-phosphate as cofactor.

It catalyses the reaction L-alanine = D-alanine. It participates in amino-acid biosynthesis; D-alanine biosynthesis; D-alanine from L-alanine: step 1/1. Its function is as follows. Catalyzes the interconversion of L-alanine and D-alanine. May also act on other amino acids. This is Alanine racemase 1 (alr1) from Clostridium acetobutylicum (strain ATCC 824 / DSM 792 / JCM 1419 / IAM 19013 / LMG 5710 / NBRC 13948 / NRRL B-527 / VKM B-1787 / 2291 / W).